We begin with the raw amino-acid sequence, 507 residues long: Putative pentatricopeptide repeat-containing protein At3g16710, mitochondrial (507 aa).

A mitochondrion-targeting transit peptide spans 1-48 (MRRSIATGFASIVKGFHLHSHRHRLQISNPRTAASLSLCGFCFWIRAF). 13 PPR repeats span residues 47–81 (AFSSYRKILRNGLHNLQFNDALDLFTRMVHSRPLP), 82–116 (SIIDFTRLLSVIAKMNRYDVVISLFEQMQILGIPP), 117–151 (LLCTCNIVMHCVCLSSQPCRASCFLGKMMKLGFEP), 152–186 (DLVTFTSLLNGYCHWNRIEDAIALFDQILGMGFKP), 187–221 (NVVTYTTLIRCLCKNRHLNHAVELFNQMGTNGSRP), 222–256 (NVVTYNALVTGLCEIGRWGDAAWLLRDMMKRRIEP), 257–291 (NVITFTALIDAFVKVGKLMEAKELYNVMIQMSVYP), 292–326 (DVFTYGSLINGLCMYGLLDEARQMFYLMERNGCYP), 327–361 (NEVIYTTLIHGFCKSKRVEDGMKIFYEMSQKGVVA), 362–396 (NTITYTVLIQGYCLVGRPDVAQEVFNQMSSRRAPP), 397–431 (DIRTYNVLLDGLCCNGKVEKALMIFEYMRKREMDI), 432–466 (NIVTYTIIIQGMCKLGKVEDAFDLFCSLFSKGMKP), and 467–501 (NVITYTTMISGFCRRGLIHEADSLFKKMKEDGFLP).

The protein belongs to the PPR family. P subfamily.

It is found in the mitochondrion. This chain is Putative pentatricopeptide repeat-containing protein At3g16710, mitochondrial, found in Arabidopsis thaliana (Mouse-ear cress).